A 412-amino-acid chain; its full sequence is Adenosine receptor A2a (412 aa).

Topologically, residues 1–7 are extracellular; sequence MPTVGSL. The chain crosses the membrane as a helical span at residues 8-32; it reads VYIMVELAIALLAILGNMLVCWAVW. The Cytoplasmic segment spans residues 33–42; it reads LNSNLQNVTN. The chain crosses the membrane as a helical span at residues 43 to 66; it reads YFVVSLAAADIAVGVLAIPFAITI. Topologically, residues 67 to 77 are extracellular; that stretch reads STGFCAACHGC. Cystine bridges form between cysteine 71/cysteine 159, cysteine 74/cysteine 146, and cysteine 77/cysteine 166. The chain crosses the membrane as a helical span at residues 78–100; sequence LFIACFVLVLTQSSIFSLLAIAI. Residues 101–120 are Cytoplasmic-facing; the sequence is DRYIAIRIPLRYNGLVTGTR. Residues 121–143 form a helical membrane-spanning segment; the sequence is AKGVIAVCWVLSFAIGLTPMLGW. Residues 144–173 lie on the Extracellular side of the membrane; it reads NNCHHWGEGENQSQGCGEGQVACLFEDVVP. A glycan (N-linked (GlcNAc...) asparagine) is linked at asparagine 154. Glutamate 169 provides a ligand contact to adenosine. The helical transmembrane segment at 174–198 threads the bilayer; that stretch reads MNYMVYYNFFACVLVPLLLMLGVYL. The Cytoplasmic segment spans residues 199 to 234; that stretch reads RIFLAARRQLKQMETQPLPGERARSTLQKEVHAAKS. A helical membrane pass occupies residues 235-258; the sequence is LAIIVGLFALCWLPLHIINCFTFF. An adenosine-binding site is contributed by asparagine 253. An intrachain disulfide couples cysteine 259 to cysteine 262. Residues 259-266 lie on the Extracellular side of the membrane; it reads CPECPHAP. The chain crosses the membrane as a helical span at residues 267–290; that stretch reads LWLMYPAIILSHFNSVVNPFIYAY. 2 residues coordinate adenosine: serine 277 and histidine 278. Topologically, residues 291-412 are cytoplasmic; it reads RIREFRHTFH…PLAQDGAGVS (122 aa). Residues 368-412 form a disordered region; it reads RASARESPGDTGLPDVELLSHELHGASPESPGLEGPLAQDGAGVS.

This sequence belongs to the G-protein coupled receptor 1 family. In terms of assembly, interacts (via cytoplasmic C-terminal domain) with USP4; the interaction is direct. May interact with DRD4. Interacts with NECAB2. Interacts (via cytoplasmic C-terminal domain) with GAS2L2; interaction enhances receptor-mediated adenylyl cyclase activity. Ubiquitinated. Deubiquitinated by USP4; leading to stabilization and expression at the cell surface.

The protein resides in the cell membrane. Its function is as follows. Receptor for adenosine. The activity of this receptor is mediated by G proteins which activate adenylyl cyclase. This is Adenosine receptor A2a (ADORA2A) from Equus caballus (Horse).